The following is a 482-amino-acid chain: ATP synthase subunit beta (482 aa).

Residue 167 to 174 (GGAGVGKT) participates in ATP binding.

Belongs to the ATPase alpha/beta chains family. As to quaternary structure, F-type ATPases have 2 components, CF(1) - the catalytic core - and CF(0) - the membrane proton channel. CF(1) has five subunits: alpha(3), beta(3), gamma(1), delta(1), epsilon(1). CF(0) has three main subunits: a(1), b(2) and c(9-12). The alpha and beta chains form an alternating ring which encloses part of the gamma chain. CF(1) is attached to CF(0) by a central stalk formed by the gamma and epsilon chains, while a peripheral stalk is formed by the delta and b chains.

It is found in the cell membrane. It carries out the reaction ATP + H2O + 4 H(+)(in) = ADP + phosphate + 5 H(+)(out). In terms of biological role, produces ATP from ADP in the presence of a proton gradient across the membrane. The catalytic sites are hosted primarily by the beta subunits. The chain is ATP synthase subunit beta from Corynebacterium aurimucosum (strain ATCC 700975 / DSM 44827 / CIP 107346 / CN-1) (Corynebacterium nigricans).